A 213-amino-acid polypeptide reads, in one-letter code: Redox-sensing transcriptional repressor Rex (213 aa).

The H-T-H motif DNA-binding region spans 18-57 (LYYRIFKRFHAEKIERANSKQIAEAIGIDSATVRRDFSYF). Residue 92-97 (GIGNMG) coordinates NAD(+).

This sequence belongs to the transcriptional regulatory Rex family. As to quaternary structure, homodimer.

It localises to the cytoplasm. Functionally, modulates transcription in response to changes in cellular NADH/NAD(+) redox state. Binds to the promoter of the aldehyde-alcohol dehydrogenase adhE gene. Functions as a redox-dependent repressor of adhE expression. The chain is Redox-sensing transcriptional repressor Rex from Streptococcus pneumoniae (strain ATCC BAA-255 / R6).